The sequence spans 357 residues: Non-structural protein NS2 (357 aa).

2 disordered regions span residues 163–199 (NERE…AREM) and 228–267 (LDEK…PKTH). Composition is skewed to acidic residues over residues 230 to 241 (EKDEEDGDERED) and 250 to 260 (DDDEQGEDASD).

Belongs to the orbivirus non-structural protein NS2 family.

In terms of biological role, single-stranded RNA-binding protein. This Antilocapra americana (Pronghorn) protein is Non-structural protein NS2 (Segment-8).